The following is a 488-amino-acid chain: Probable multidrug resistance protein NorM (488 aa).

12 consecutive transmembrane segments (helical) span residues 11–31 (AILRLAGPLIAAQLAYVAMVF), 55–75 (YAFVSTFCVGVVAAVGNLVAI), 97–117 (AALALAAGLLLWNLRPLLLVF), 127–147 (AMQFLHSLTFALPGYMAFMVL), 159–179 (PVMAISVLGALANLALNYSFI), 190–210 (LAGIGLVTALVMNCMPLLLAL), 247–267 (GTYAVESGMFTVATLCMGIIG), 271–291 (LAAHQIAIQAVYVAFMVPVGL), 317–337 (VGIGFGALCMLLFAGLFWWMP), 355–375 (VAAMAVSLLAIAAWFELFDGT), 393–413 (FLVGLACYWLVGVPLACLLAF), and 421–441 (GVWWGLAGGLACAAIGLTLAF).

Belongs to the multi antimicrobial extrusion (MATE) (TC 2.A.66.1) family.

The protein localises to the cell inner membrane. Functionally, multidrug efflux pump. The polypeptide is Probable multidrug resistance protein NorM (norM) (Pseudomonas aeruginosa (strain ATCC 15692 / DSM 22644 / CIP 104116 / JCM 14847 / LMG 12228 / 1C / PRS 101 / PAO1)).